Here is a 240-residue protein sequence, read N- to C-terminus: Probable transcriptional activator (240 aa).

The tract at residues 17–28 (CTSCQARHGVVC) is essential for the oxygen-regulated activity. Residues 158 to 232 (RTAEEKVASL…FRHIIVPDMD (75 aa)) enclose the HTH crp-type domain. The H-T-H motif DNA-binding region spans 191-210 (RAEIADFLGLTIETVSRQMT).

Functionally, promotes the microaerobic and symbiotic induction of fixN, possibly by binding to the FNR consensus binding site upstream of fixN. The polypeptide is Probable transcriptional activator (fnrN) (Rhizobium leguminosarum bv. viciae).